The primary structure comprises 133 residues: Small ribosomal subunit protein uS8 (133 aa).

This sequence belongs to the universal ribosomal protein uS8 family. Part of the 30S ribosomal subunit. Contacts proteins S5 and S12.

Its function is as follows. One of the primary rRNA binding proteins, it binds directly to 16S rRNA central domain where it helps coordinate assembly of the platform of the 30S subunit. The protein is Small ribosomal subunit protein uS8 of Chlamydia felis (strain Fe/C-56) (Chlamydophila felis).